A 649-amino-acid polypeptide reads, in one-letter code: Centrosomal protein of 63 kDa-A (649 aa).

Coiled coils occupy residues 19 to 185 (DSCE…YQHQ) and 222 to 556 (EEEL…DAAS). Ser-560 carries the post-translational modification Phosphoserine; by atm and atr. Residues 612–645 (FLQEEEQRSHELLQRLNAHIEELKQESQRTVEHF) adopt a coiled-coil conformation.

It belongs to the CEP63 family. Phosphorylation at Ser-560 by atm and atr promotes its delocalization from the centrosome and impairs its ability to promote centrosome dependent spindle assembly.

It is found in the cytoplasm. It localises to the cytoskeleton. The protein localises to the microtubule organizing center. The protein resides in the centrosome. Its subcellular location is the centriole. In terms of biological role, required for normal spindle assembly. Plays a key role in mother-centriole-dependent centriole duplication. Plays a role in DNA damage response. Following DNA damage, such as double-strand breaks (DSBs), is removed from centrosomes; this leads to the inactivation of spindle assembly and delay in mitotic progression. The polypeptide is Centrosomal protein of 63 kDa-A (cep63-a) (Xenopus laevis (African clawed frog)).